Here is a 245-residue protein sequence, read N- to C-terminus: 14-3-3 protein theta (245 aa).

At Met1 the chain carries N-acetylmethionine. Lys3 is subject to N6-acetyllysine. Lys49 is subject to N6-acetyllysine; alternate. Residue Lys49 forms a Glycyl lysine isopeptide (Lys-Gly) (interchain with G-Cter in SUMO2); alternate linkage. The residue at position 68 (Lys68) is an N6-acetyllysine. Position 82 is a 3'-nitrotyrosine (Tyr82). Position 92 is a phosphoserine (Ser92). Tyr104 carries the post-translational modification 3'-nitrotyrosine. Residue Lys115 is modified to N6-acetyllysine. Ser232 is subject to Phosphoserine; by CK1.

Belongs to the 14-3-3 family. As to quaternary structure, homodimer. Interacts with CDKN1B ('Thr-198' phosphorylated form); the interaction translocates CDKN1B to the cytoplasm. Interacts with SSH1. Interacts with GAB2. Interacts with RGS7 (phosphorylated form). Interacts with CDK16. Interacts with the 'Ser-241' phosphorylated form of PDPK1. Interacts with the 'Thr-369' phosphorylated form of DAPK2. Interacts with PI4KB, TBC1D22A and TBC1D22B. Interacts with SLITRK1. Interacts with RIPOR2. Interacts with INAVA; the interaction increases upon PRR (pattern recognition receptor) stimulation and is required for cellular signaling pathway activation and cytokine secretion. Interacts with MARK2, MARK3 and MARK4. Interacts with MEFV.

The protein resides in the cytoplasm. Adapter protein implicated in the regulation of a large spectrum of both general and specialized signaling pathways. Binds to a large number of partners, usually by recognition of a phosphoserine or phosphothreonine motif. Binding generally results in the modulation of the activity of the binding partner. Negatively regulates the kinase activity of PDPK1. This Mus musculus (Mouse) protein is 14-3-3 protein theta (Ywhaq).